The primary structure comprises 143 residues: Small ribosomal subunit protein bS6 (143 aa).

The interval 98 to 143 (TEQSLIMKSKDEKGDKPERSERRRRDDEEGEAPAANDNDGDNAEAA) is disordered. A compositionally biased stretch (basic and acidic residues) spans 105-124 (KSKDEKGDKPERSERRRRDD).

Belongs to the bacterial ribosomal protein bS6 family.

Its function is as follows. Binds together with bS18 to 16S ribosomal RNA. The polypeptide is Small ribosomal subunit protein bS6 (Xanthomonas euvesicatoria pv. vesicatoria (strain 85-10) (Xanthomonas campestris pv. vesicatoria)).